Consider the following 378-residue polypeptide: D-alanine--D-alanine ligase (378 aa).

The region spanning 140–346 (KKIISQAGIR…YSDLIDRLIQ (207 aa)) is the ATP-grasp domain. 170-225 (EEKLGNLTFVKPAKQGSSVGIHRVTNAEEYEKALDDAFKYDYKILVEQGIANPQEI) contacts ATP. Positions 300, 313, and 315 each coordinate Mg(2+).

It belongs to the D-alanine--D-alanine ligase family. Mg(2+) is required as a cofactor. Mn(2+) serves as cofactor.

The protein resides in the cytoplasm. It carries out the reaction 2 D-alanine + ATP = D-alanyl-D-alanine + ADP + phosphate + H(+). It participates in cell wall biogenesis; peptidoglycan biosynthesis. Its function is as follows. Cell wall formation. The polypeptide is D-alanine--D-alanine ligase (Limosilactobacillus reuteri (strain DSM 20016) (Lactobacillus reuteri)).